We begin with the raw amino-acid sequence, 736 residues long: Nucleoporin nup60 (736 aa).

Residues 1–46 (MSSGPIRTLHKGKAARNRTPYDRIAASKDGNHSNGPQTPSKSIFQR) form a disordered region. Basic and acidic residues predominate over residues 19–31 (TPYDRIAASKDGN). Residues 32-43 (HSNGPQTPSKSI) are compositionally biased toward polar residues. Residues Ser157, Ser159, Ser161, and Ser162 each carry the phosphoserine modification. 5 disordered regions span residues 178-210 (RAAA…NSAK), 295-321 (DTSF…KTPS), 338-519 (TPSI…PNET), 565-614 (AVTD…RSLF), and 647-701 (EQAE…FPKF). 2 stretches are compositionally biased toward polar residues: residues 196–210 (RTSS…NSAK) and 295–314 (DTSF…TTAN). The segment covering 375-397 (QIRPSSEKSEPEKKEPSAFETLE) has biased composition (basic and acidic residues). A compositionally biased stretch (polar residues) spans 456-473 (SATTDKPSPPVSSIFSFN). 2 stretches are compositionally biased toward low complexity: residues 474–505 (APSA…TSFS) and 573–587 (EVSS…TMIS). The segment covering 588–597 (QPNTGFSFGS) has biased composition (polar residues). Positions 664 to 692 (EVEKPSAEGTNEHKQDATMTLEKTDKQGS) are enriched in basic and acidic residues.

In terms of assembly, component of the nuclear pore complex (NPC). NPC constitutes the exclusive means of nucleocytoplasmic transport. NPCs allow the passive diffusion of ions and small molecules and the active, nuclear transport receptor-mediated bidirectional transport of macromolecules such as proteins, RNAs, ribonucleoparticles (RNPs), and ribosomal subunits across the nuclear envelope.

It localises to the nucleus. The protein localises to the nuclear pore complex. Its subcellular location is the nucleus membrane. Its function is as follows. Functions as a component of the nuclear pore complex (NPC). NPC components, collectively referred to as nucleoporins (NUPs), can play the role of both NPC structural components and of docking or interaction partners for transiently associated nuclear transport factors. Active directional transport is assured by both, a Phe-Gly (FG) repeat affinity gradient for these transport factors across the NPC and a transport cofactor concentration gradient across the nuclear envelope. This chain is Nucleoporin nup60 (nup60), found in Schizosaccharomyces pombe (strain 972 / ATCC 24843) (Fission yeast).